The following is a 445-amino-acid chain: Selenocysteine lyase (445 aa).

Position 1 is an N-acetylmethionine (Met-1). Residues 1–28 (MEAAVAPGRDAPAPAASQPSGCGKHNSP) are disordered. Residue Ser-129 is modified to Phosphoserine. Residue Lys-259 is modified to N6-(pyridoxal phosphate)lysine. The S-selanylcysteine intermediate role is filled by Cys-388.

This sequence belongs to the class-V pyridoxal-phosphate-dependent aminotransferase family. As to quaternary structure, homodimer. Pyridoxal 5'-phosphate serves as cofactor.

It localises to the cytoplasm. The protein resides in the cytosol. The enzyme catalyses L-selenocysteine + AH2 = hydrogenselenide + L-alanine + A + H(+). In terms of biological role, catalyzes the decomposition of L-selenocysteine to L-alanine and elemental selenium. This Homo sapiens (Human) protein is Selenocysteine lyase (SCLY).